A 189-amino-acid chain; its full sequence is Small t antigen (189 aa).

M1 is modified (N-acetylmethionine; by host). Residues 12-75 (ELMDLLQITR…LMEIRSQCGS (64 aa)) form the J domain. The segment at 111-124 (CTKFVRANCNCIVC) adopts a C4-type; atypical zinc-finger fold. The H1C3-type; atypical zinc finger occupies 130–152 (HAGTKKNLKKPCLVWGECWCYKC).

As to quaternary structure, interacts with host PPP2R1A; the interaction inhibits PP2A activity.

It is found in the host cytoplasm. The protein resides in the host nucleus. In terms of biological role, promotes efficient viral genome replication by accelerating both G1 and S phase progression of the cell cycle. Inhibits host PP2A by binding to the A subunit, thereby displacing lower affinity regulatory B subunit. Inactivation of PP2A in turn results in the transactivation of cyclin A and cyclin D1 promoters. Late during the infection cycle, ST may induce dephosphorylation of host MTOR, leading to the inhibition of cap-dependent translation. May establish and maintain high levels of viral genomes during persistent infection in cell culture. The sequence is that of Small t antigen from B-lymphotropic polyomavirus (LPV).